A 326-amino-acid polypeptide reads, in one-letter code: Small ribosomal subunit biogenesis GTPase RsgA (326 aa).

One can recognise a CP-type G domain in the interval 80-241 (LSHQMHIIAS…IIDTPGIKGF (162 aa)). Residues 129–132 (NKID) and 183–191 (GHSGVGKST) each bind GTP. Zn(2+) is bound by residues Cys-265, Cys-270, His-272, and Cys-278.

Belongs to the TRAFAC class YlqF/YawG GTPase family. RsgA subfamily. Monomer. Associates with 30S ribosomal subunit, binds 16S rRNA. Requires Zn(2+) as cofactor.

The protein localises to the cytoplasm. One of several proteins that assist in the late maturation steps of the functional core of the 30S ribosomal subunit. Helps release RbfA from mature subunits. May play a role in the assembly of ribosomal proteins into the subunit. Circularly permuted GTPase that catalyzes slow GTP hydrolysis, GTPase activity is stimulated by the 30S ribosomal subunit. In Flavobacterium psychrophilum (strain ATCC 49511 / DSM 21280 / CIP 103535 / JIP02/86), this protein is Small ribosomal subunit biogenesis GTPase RsgA.